Reading from the N-terminus, the 82-residue chain is Diphthamide biosynthesis protein 3 (82 aa).

Positions 8–64 (IYDEVEIEDMTYDPALQTYSYPCPCGDKFEIALADLQDGQDIAVCPSCSLMVRVIFE) constitute a DPH-type MB domain. Cysteine 30, cysteine 32, cysteine 52, and cysteine 55 together coordinate Fe cation.

It belongs to the DPH3 family. Component of the 2-(3-amino-3-carboxypropyl)histidine synthase complex composed of dph-1, dph-2, dph-3 and a NADH-dependent reductase, predominantly cbr-1. Fe(2+) serves as cofactor.

The protein localises to the cytoplasm. It is found in the nucleus. The catalysed reaction is [3Fe-4S](1+)-[protein] + Fe(2+)-[Dph3] = [3Fe-4S](0)-[protein] + Fe(3+)-[Dph3]. The enzyme catalyses 2 [3Fe-4S](0)-[protein] + 2 Fe(2+)-[Dph3] + NADH = 2 [4Fe-4S](1+)-[protein] + 2 [Dph3] + NAD(+) + H(+). The protein operates within protein modification; peptidyl-diphthamide biosynthesis. In terms of biological role, required for the first step of diphthamide biosynthesis, a post-translational modification of histidine which occurs in elongation factor 2. Dph-1 and dph-2 transfer a 3-amino-3-carboxypropyl (ACP) group from S-adenosyl-L-methionine (SAM) to a histidine residue, the reaction is assisted by a reduction system comprising dph-3 and a NADH-dependent reductase, predominantly cbr-1. Acts as an electron donor to reduce the Fe-S cluster in dph1-dph2 keeping the [4Fe-4S] clusters in the active and reduced state. Restores iron to dph-1-dph-2 iron-sulfur clusters which have degraded from [4Fe-4S] to [3Fe-4S] by donating an iron atom to reform [4Fe-4S] clusters, in a manner dependent on the presence of elongation factor 2 and SAM. Associates with the elongator complex and is required for tRNA Wobble base modifications mediated by the elongator complex. The elongator complex is required for multiple tRNA modifications, including mcm5U (5-methoxycarbonylmethyl uridine), mcm5s 2U (5-methoxycarbonylmethyl-2-thiouridine), and ncm5U (5-carbamoylmethyl uridine). The sequence is that of Diphthamide biosynthesis protein 3 (dph-3) from Neurospora crassa (strain ATCC 24698 / 74-OR23-1A / CBS 708.71 / DSM 1257 / FGSC 987).